The sequence spans 291 residues: Lipoyl synthase, organellar chromatophore (291 aa).

The [4Fe-4S] cluster site is built by cysteine 33, cysteine 38, cysteine 44, cysteine 59, cysteine 63, cysteine 66, and serine 274. The 219-residue stretch at 45–263 folds into the Radical SAM core domain; sequence FAGGTATFLI…AIGELEMNFL (219 aa).

Belongs to the radical SAM superfamily. Lipoyl synthase family. Requires [4Fe-4S] cluster as cofactor.

Its subcellular location is the plastid. It localises to the organellar chromatophore. The enzyme catalyses [[Fe-S] cluster scaffold protein carrying a second [4Fe-4S](2+) cluster] + N(6)-octanoyl-L-lysyl-[protein] + 2 oxidized [2Fe-2S]-[ferredoxin] + 2 S-adenosyl-L-methionine + 4 H(+) = [[Fe-S] cluster scaffold protein] + N(6)-[(R)-dihydrolipoyl]-L-lysyl-[protein] + 4 Fe(3+) + 2 hydrogen sulfide + 2 5'-deoxyadenosine + 2 L-methionine + 2 reduced [2Fe-2S]-[ferredoxin]. Its pathway is protein modification; protein lipoylation via endogenous pathway; protein N(6)-(lipoyl)lysine from octanoyl-[acyl-carrier-protein]: step 2/2. In terms of biological role, catalyzes the radical-mediated insertion of two sulfur atoms into the C-6 and C-8 positions of the octanoyl moiety bound to the lipoyl domains of lipoate-dependent enzymes, thereby converting the octanoylated domains into lipoylated derivatives. In Paulinella chromatophora, this protein is Lipoyl synthase, organellar chromatophore.